Reading from the N-terminus, the 52-residue chain is Rubredoxin-2 (52 aa).

The region spanning Met-1–Ile-52 is the Rubredoxin-like domain. The Fe cation site is built by Cys-6, Cys-9, Cys-39, and Cys-42.

Belongs to the rubredoxin family. As to quaternary structure, monomer. Requires Fe(3+) as cofactor.

Its function is as follows. Serves as an electron acceptor for pyruvate ferredoxin oxidoreductase (PFOR). The sequence is that of Rubredoxin-2 (rub2) from Chlorobaculum tepidum (strain ATCC 49652 / DSM 12025 / NBRC 103806 / TLS) (Chlorobium tepidum).